The sequence spans 156 residues: Deoxyuridine 5'-triphosphate nucleotidohydrolase (156 aa).

Substrate contacts are provided by residues 76 to 78 (RSG), asparagine 89, 93 to 95 (TVD), and lysine 103.

The protein belongs to the dUTPase family. The cofactor is Mg(2+).

The enzyme catalyses dUTP + H2O = dUMP + diphosphate + H(+). Its pathway is pyrimidine metabolism; dUMP biosynthesis; dUMP from dCTP (dUTP route): step 2/2. Functionally, this enzyme is involved in nucleotide metabolism: it produces dUMP, the immediate precursor of thymidine nucleotides and it decreases the intracellular concentration of dUTP so that uracil cannot be incorporated into DNA. In Agrobacterium fabrum (strain C58 / ATCC 33970) (Agrobacterium tumefaciens (strain C58)), this protein is Deoxyuridine 5'-triphosphate nucleotidohydrolase.